The sequence spans 162 residues: Ribonuclease (162 aa).

The first 29 residues, 1 to 29 (MKKISSVFTMFALIAAILFSGFIPQQAYA), serve as a signal peptide directing secretion. A propeptide spanning residues 30 to 53 (ETPLTQTATNETATIQLTSDVHTL) is cleaved from the precursor. Glu125 serves as the catalytic Proton acceptor. The Proton donor role is filled by His154.

The protein belongs to the ribonuclease N1/T1 family.

Its subcellular location is the secreted. In terms of biological role, this is a purine-specific ribonuclease. This Bacillus intermedius protein is Ribonuclease.